The sequence spans 75 residues: Large ribosomal subunit protein bL31 (75 aa).

Residues Cys-16, Cys-18, Cys-36, and Cys-39 each contribute to the Zn(2+) site.

It belongs to the bacterial ribosomal protein bL31 family. Type A subfamily. Part of the 50S ribosomal subunit. Requires Zn(2+) as cofactor.

Functionally, binds the 23S rRNA. This chain is Large ribosomal subunit protein bL31, found in Desulforapulum autotrophicum (strain ATCC 43914 / DSM 3382 / VKM B-1955 / HRM2) (Desulfobacterium autotrophicum).